A 203-amino-acid polypeptide reads, in one-letter code: MEEGIVHKLDVFLIDENVSIKHVNLFDGDSYGCNIHLKTATCKYITFILVLEPDWENIVEAKPIHMRLNGKKIRVPLVAKTHTSLIYKVVIYVEEDALARFYSDVERSYTDVYPTFLVNTDTRRYYILDSGRTYTYIDPFISDGDKRRWLTREIEEAYDASTEEEEEDDTEEDMDTVHLYCLEEEDEEKIADTGNDNQKDAED.

The segment at 182-203 is disordered; the sequence is LEEEDEEKIADTGNDNQKDAED.

The protein belongs to the poxviridae C7 protein family.

In terms of biological role, plays a role for multiplication of the virus in different cell types. In Myxoma virus (strain Lausanne) (MYXV), this protein is Probable host range protein 2-3.